Here is a 310-residue protein sequence, read N- to C-terminus: Elongation factor Ts, mitochondrial (310 aa).

The N-terminal 42 residues, Met1–Tyr42, are a transit peptide targeting the mitochondrion.

Belongs to the EF-Ts family.

It is found in the mitochondrion. Associates with the EF-Tu.GDP complex and induces the exchange of GDP to GTP. It remains bound to the aminoacyl-tRNA.EF-Tu.GTP complex up to the GTP hydrolysis stage on the ribosome. The protein is Elongation factor Ts, mitochondrial (tsf1) of Schizosaccharomyces japonicus (strain yFS275 / FY16936) (Fission yeast).